Consider the following 404-residue polypeptide: Phosphopentomutase (404 aa).

Mn(2+) contacts are provided by Asp10, Asp303, His308, Asp344, His345, and His356.

This sequence belongs to the phosphopentomutase family. Mn(2+) serves as cofactor.

It localises to the cytoplasm. The enzyme catalyses 2-deoxy-alpha-D-ribose 1-phosphate = 2-deoxy-D-ribose 5-phosphate. The catalysed reaction is alpha-D-ribose 1-phosphate = D-ribose 5-phosphate. It participates in carbohydrate degradation; 2-deoxy-D-ribose 1-phosphate degradation; D-glyceraldehyde 3-phosphate and acetaldehyde from 2-deoxy-alpha-D-ribose 1-phosphate: step 1/2. Isomerase that catalyzes the conversion of deoxy-ribose 1-phosphate (dRib-1-P) and ribose 1-phosphate (Rib-1-P) to deoxy-ribose 5-phosphate (dRib-5-P) and ribose 5-phosphate (Rib-5-P), respectively. The protein is Phosphopentomutase of Shewanella baltica (strain OS155 / ATCC BAA-1091).